The primary structure comprises 141 residues: Hemoglobin subunit alpha (141 aa).

One can recognise a Globin domain in the interval valine 1–arginine 141. A Phosphoserine modification is found at serine 3. An N6-succinyllysine modification is found at lysine 7. The residue at position 8 (threonine 8) is a Phosphothreonine. Position 11 is an N6-succinyllysine (lysine 11). Lysine 16 carries the post-translational modification N6-acetyllysine; alternate. An N6-succinyllysine; alternate modification is found at lysine 16. Tyrosine 24 is modified (phosphotyrosine). Position 35 is a phosphoserine (serine 35). An N6-succinyllysine modification is found at lysine 40. Serine 49 is subject to Phosphoserine. Histidine 58 contacts O2. Histidine 87 contacts heme b. Serine 102 is subject to Phosphoserine. Threonine 108 is subject to Phosphothreonine. Phosphoserine is present on serine 124. Threonine 134 and threonine 137 each carry phosphothreonine. Residue serine 138 is modified to Phosphoserine.

This sequence belongs to the globin family. In terms of assembly, heterotetramer of two alpha chains and two beta chains. In terms of tissue distribution, red blood cells.

Involved in oxygen transport from the lung to the various peripheral tissues. Its function is as follows. Hemopressin acts as an antagonist peptide of the cannabinoid receptor CNR1. Hemopressin-binding efficiently blocks cannabinoid receptor CNR1 and subsequent signaling. The chain is Hemoglobin subunit alpha (HBA) from Odobenus rosmarus divergens (Pacific walrus).